The chain runs to 108 residues: Glutaredoxin-1 (108 aa).

One can recognise a Glutaredoxin domain in the interval 3-106 (EEFVQQRLAN…DILSSIGVLR (104 aa)). Cysteines 23 and 26 form a disulfide.

The protein belongs to the glutaredoxin family.

It localises to the virion. Its function is as follows. Displays thioltransferase and dehydroascorbate reductase activities. The chain is Glutaredoxin-1 (OPG075) from Vaccinia virus (strain Copenhagen) (VACV).